Reading from the N-terminus, the 76-residue chain is uncharacterized protein (76 aa).

Residues 27 to 76 form a disordered region; sequence SINNGEGSSVVHRDATAPPTPPVVPTSTLQVPGLQRARTPEPNDPRVANL.

This is an uncharacterized protein from Caenorhabditis elegans.